Consider the following 201-residue polypeptide: Holliday junction branch migration complex subunit RuvA (201 aa).

A domain I region spans residues 1 to 64 (MIGRLHGKII…EDAHLLFGFA (64 aa)). The tract at residues 65-143 (QKQDRTLFRE…GVAQSDFFEE (79 aa)) is domain II. The segment at 144–154 (HSVETIVATHS) is flexible linker. The domain III stretch occupies residues 154–201 (SHDPADEARDALVALGYKLADAEKMIKKVNKAGATSEQLIREALKASL).

The protein belongs to the RuvA family. In terms of assembly, homotetramer. Forms an RuvA(8)-RuvB(12)-Holliday junction (HJ) complex. HJ DNA is sandwiched between 2 RuvA tetramers; dsDNA enters through RuvA and exits via RuvB. An RuvB hexamer assembles on each DNA strand where it exits the tetramer. Each RuvB hexamer is contacted by two RuvA subunits (via domain III) on 2 adjacent RuvB subunits; this complex drives branch migration. In the full resolvosome a probable DNA-RuvA(4)-RuvB(12)-RuvC(2) complex forms which resolves the HJ.

It localises to the cytoplasm. The RuvA-RuvB-RuvC complex processes Holliday junction (HJ) DNA during genetic recombination and DNA repair, while the RuvA-RuvB complex plays an important role in the rescue of blocked DNA replication forks via replication fork reversal (RFR). RuvA specifically binds to HJ cruciform DNA, conferring on it an open structure. The RuvB hexamer acts as an ATP-dependent pump, pulling dsDNA into and through the RuvAB complex. HJ branch migration allows RuvC to scan DNA until it finds its consensus sequence, where it cleaves and resolves the cruciform DNA. This Actinobacillus pleuropneumoniae serotype 7 (strain AP76) protein is Holliday junction branch migration complex subunit RuvA.